The sequence spans 224 residues: UPF0758 protein Avin_02940 (224 aa).

The region spanning 102 to 224 is the MPN domain; the sequence is ALESPQAVRD…PLSMAEQGWL (123 aa). Zn(2+)-binding residues include H173, H175, and D186. The JAMM motif signature appears at 173–186; it reads HNHPSGIAEPSQAD.

Belongs to the UPF0758 family.

The chain is UPF0758 protein Avin_02940 from Azotobacter vinelandii (strain DJ / ATCC BAA-1303).